Reading from the N-terminus, the 63-residue chain is MSKKCQLTGKVANNGYAVSHSHKRTKKLQNVNLQYKKVWSTEQNKWIKMLISTKAIKTLTKAL.

Belongs to the bacterial ribosomal protein bL28 family.

The protein resides in the plastid. The protein localises to the chloroplast. In Porphyra purpurea (Red seaweed), this protein is Large ribosomal subunit protein bL28c (rpl28).